Reading from the N-terminus, the 62-residue chain is MPIINVKLLEGRSDEQLKNLVTEVTNAVEKTTGANREAIHVIIEEMQKNHYGVAGVRKSDAE.

Proline 2 functions as the Proton acceptor; via imino nitrogen in the catalytic mechanism.

Belongs to the 4-oxalocrotonate tautomerase family.

In Staphylococcus haemolyticus (strain JCSC1435), this protein is Probable tautomerase SH1546.